Consider the following 358-residue polypeptide: Heme A synthase (358 aa).

8 helical membrane passes run 25-45 (LVRY…MVGG), 111-131 (LLAR…WLTG), 141-161 (MLGL…MVAS), 176-196 (IHLT…RGLV), 210-230 (FAGW…LVAG), 269-289 (VQFV…LHAV), 304-324 (TIVL…TLLM), and 326-346 (APLH…AFAV). His273 provides a ligand contact to heme. A heme-binding site is contributed by His334.

The protein belongs to the COX15/CtaA family. Type 2 subfamily. Interacts with CtaB. It depends on heme b as a cofactor.

It localises to the cell membrane. The enzyme catalyses Fe(II)-heme o + 2 A + H2O = Fe(II)-heme a + 2 AH2. The protein operates within porphyrin-containing compound metabolism; heme A biosynthesis; heme A from heme O: step 1/1. Its function is as follows. Catalyzes the conversion of heme O to heme A by two successive hydroxylations of the methyl group at C8. The first hydroxylation forms heme I, the second hydroxylation results in an unstable dihydroxymethyl group, which spontaneously dehydrates, resulting in the formyl group of heme A. The chain is Heme A synthase from Brucella suis (strain ATCC 23445 / NCTC 10510).